Consider the following 216-residue polypeptide: Orotate phosphoribosyltransferase (216 aa).

5-phospho-alpha-D-ribose 1-diphosphate is bound by residues R101, K105, H107, and 127-135; that span reads EDLISTGGS. Residue S131 coordinates orotate.

It belongs to the purine/pyrimidine phosphoribosyltransferase family. PyrE subfamily. As to quaternary structure, homodimer. The cofactor is Mg(2+).

The enzyme catalyses orotidine 5'-phosphate + diphosphate = orotate + 5-phospho-alpha-D-ribose 1-diphosphate. It participates in pyrimidine metabolism; UMP biosynthesis via de novo pathway; UMP from orotate: step 1/2. Catalyzes the transfer of a ribosyl phosphate group from 5-phosphoribose 1-diphosphate to orotate, leading to the formation of orotidine monophosphate (OMP). The polypeptide is Orotate phosphoribosyltransferase (Cutibacterium acnes (strain DSM 16379 / KPA171202) (Propionibacterium acnes)).